Reading from the N-terminus, the 238-residue chain is Ribosomal RNA small subunit methyltransferase E 1 (238 aa).

Belongs to the RNA methyltransferase RsmE family.

The protein resides in the cytoplasm. The enzyme catalyses uridine(1498) in 16S rRNA + S-adenosyl-L-methionine = N(3)-methyluridine(1498) in 16S rRNA + S-adenosyl-L-homocysteine + H(+). In terms of biological role, specifically methylates the N3 position of the uracil ring of uridine 1498 (m3U1498) in 16S rRNA. Acts on the fully assembled 30S ribosomal subunit. The protein is Ribosomal RNA small subunit methyltransferase E 1 (rsmE1) of Borreliella burgdorferi (strain ATCC 35210 / DSM 4680 / CIP 102532 / B31) (Borrelia burgdorferi).